A 908-amino-acid polypeptide reads, in one-letter code: Autophagy-related protein 9 (908 aa).

Residues Met-1–Arg-216 lie on the Cytoplasmic side of the membrane. Residues Ser-64–His-162 form a disordered region. The chain crosses the membrane as a helical span at residues Val-217 to Val-237. The Lumenal portion of the chain corresponds to Asp-238–Asn-259. An N-linked (GlcNAc...) asparagine glycan is attached at Asn-259. A helical membrane pass occupies residues Met-260–Ile-280. Residues Gln-281–Arg-433 lie on the Cytoplasmic side of the membrane. The stretch at Phe-434–Ile-454 is an intramembrane region. Over Val-455–Ser-525 the chain is Cytoplasmic. A helical transmembrane segment spans residues Phe-526–Phe-546. At Leu-547–Arg-555 the chain is on the lumenal side. A helical membrane pass occupies residues Thr-556 to Ser-576. At Glu-577–Lys-622 the chain is on the cytoplasmic side. The stretch at Leu-623–Ser-643 is an intramembrane region. Topologically, residues Leu-644–Arg-908 are cytoplasmic. Disordered regions lie at residues Ala-751–Ala-779 and Gln-809–Val-878. Residues Gly-813–Ser-825 are compositionally biased toward gly residues. A compositionally biased stretch (basic and acidic residues) spans Gln-839–Leu-852.

It belongs to the ATG9 family. In terms of assembly, homotrimer; forms a homotrimer with a central pore that forms a path between the two membrane leaflets. In terms of processing, phosphorylated by apg-1. Apg-1 phosphorylation is required for preautophagosome elongation.

It is found in the preautophagosomal structure membrane. The protein resides in the cytoplasmic vesicle membrane. It localises to the golgi apparatus membrane. Its subcellular location is the endoplasmic reticulum membrane. The catalysed reaction is a 1,2-diacyl-sn-glycero-3-phosphocholine(in) = a 1,2-diacyl-sn-glycero-3-phosphocholine(out). The enzyme catalyses a 1,2-diacyl-sn-glycero-3-phospho-L-serine(in) = a 1,2-diacyl-sn-glycero-3-phospho-L-serine(out). It carries out the reaction a 1,2-diacyl-sn-glycero-3-phosphoethanolamine(in) = a 1,2-diacyl-sn-glycero-3-phosphoethanolamine(out). It catalyses the reaction a 1,2-diacyl-sn-glycero-3-phospho-(1D-myo-inositol-3-phosphate)(in) = a 1,2-diacyl-sn-glycero-3-phospho-(1D-myo-inositol-3-phosphate)(out). Phospholipid scramblase involved in autophagy and cytoplasm to vacuole transport (Cvt) vesicle formation. Cycles between the preautophagosomal structure/phagophore assembly site (PAS) and the cytoplasmic vesicle pool and supplies membrane for the growing autophagosome. Lipid scramblase activity plays a key role in preautophagosomal structure/phagophore assembly by distributing the phospholipids that arrive through atg-2 from the cytoplasmic to the luminal leaflet of the bilayer, thereby driving autophagosomal membrane expansion. Required for mitophagy. Also involved in endoplasmic reticulum-specific autophagic process and is essential for the survival of cells subjected to severe ER stress. Different machineries are required for anterograde trafficking to the PAS during either the Cvt pathway or bulk autophagy and for retrograde trafficking. This Neurospora crassa (strain ATCC 24698 / 74-OR23-1A / CBS 708.71 / DSM 1257 / FGSC 987) protein is Autophagy-related protein 9 (apg-7).